The chain runs to 145 residues: Transcription antitermination protein NusB (145 aa).

The protein belongs to the NusB family.

Its function is as follows. Involved in transcription antitermination. Required for transcription of ribosomal RNA (rRNA) genes. Binds specifically to the boxA antiterminator sequence of the ribosomal RNA (rrn) operons. This chain is Transcription antitermination protein NusB, found in Geobacter sp. (strain M21).